Reading from the N-terminus, the 550-residue chain is Glucagon-like peptide 2 receptor (550 aa).

Over 1 to 173 (MRPQPSPAVP…SFRQNVDHYA (173 aa)) the chain is Extracellular. 3 disulfide bridges follow: cysteine 83-cysteine 105, cysteine 96-cysteine 137, and cysteine 118-cysteine 159. N-linked (GlcNAc...) asparagine glycosylation is found at asparagine 97, asparagine 113, asparagine 148, and asparagine 162. The helical transmembrane segment at 174 to 198 (LLYTLQLMYTVGYSVSLISLFLALT) threads the bilayer. Over 199 to 210 (LFLFLRKLHCTR) the chain is Cytoplasmic. Residues 211-235 (NYIHMNLFASFILKVLAVLVKDMVS) form a helical membrane-spanning segment. The Extracellular segment spans residues 236-261 (HNSYSKRPDDESGWMSYLSETSVSCR). The chain crosses the membrane as a helical span at residues 262–285 (SVQVLLHYFVGTNHLWLLVEGLYL). The Cytoplasmic portion of the chain corresponds to 286–299 (HTLLEPTVFPERRL). Residues 300–321 (WPKYLVVGWAFPMLFVIPWGFA) form a helical membrane-spanning segment. Over 322-339 (RAHLENTRCWATNGNLKI) the chain is Extracellular. Residues 340–362 (WWIIRGPMLLCVTVNFFIFLKIL) traverse the membrane as a helical segment. The Cytoplasmic segment spans residues 363–386 (KLLISKLKAHQMCFRDYKYRLAKS). The helical transmembrane segment at 387–405 (TLLLIPLLGVHEVLFTFFP) threads the bilayer. The Extracellular portion of the chain corresponds to 406–417 (DDQVQGFSKRIR). A helical transmembrane segment spans residues 418 to 438 (LFIQLTLSSVHGFLVALQYGF). Residues 439–550 (ANGEVKAELR…MEEILEESEI (112 aa)) lie on the Cytoplasmic side of the membrane.

Belongs to the G-protein coupled receptor 2 family.

It is found in the cell membrane. Its function is as follows. This is a receptor for glucagon-like peptide 2. The activity of this receptor is mediated by G proteins which activate adenylyl cyclase. The polypeptide is Glucagon-like peptide 2 receptor (Glp2r) (Rattus norvegicus (Rat)).